Reading from the N-terminus, the 399-residue chain is MENRDSVASLLLLLLLLPPPHTHQGQVLRHVVPTQNSQDSPARYLSNGPGQEPVAVMTIDLTQMSKPYSSFEFRTLDPEGVIFYGDTNTKDDWFMLGLRDGQLEIQMHNPWAQLTVGFGPRLNDGRWHQVELKMSGDSLQLWVDGKELLCLRQISGTLANNSWPSMRIALGGLLLPTSSLRFPLVPALDGCLRRDTWLGHQVHLSPSAPNLGNCDVDLQPGLFFPQGTHAEFSLQDIPQPRTDPWSFSLELGLKLVDGSGCLLALGTRTNSSWLSLHLQDQKVVLSSGVEPKLVLALDMGLPLQLKLDILKVVLSQGPKTEVLGASASRLAALRTLWSHPQGLLSLGALAGDNSSASFCLSDLWVQGQRLDIDQALNRSQNIWTHSCPHSPNNVSHISH.

The first 29 residues, Met-1 to Arg-29, serve as a signal peptide directing secretion. Laminin G-like domains lie at Arg-43–Cys-214 and Gly-221–Cys-387. A glycan (N-linked (GlcNAc...) asparagine) is linked at Asn-160. A disulfide bridge links Cys-191 with Cys-214. N-linked (GlcNAc...) asparagine glycosylation is found at Asn-270, Asn-353, Asn-377, and Asn-393. Cys-359 and Cys-387 are joined by a disulfide.

As to quaternary structure, homodimer. In terms of processing, differentially glycosylated in liver (SHBG) and testis (ABP).

The protein localises to the secreted. In terms of biological role, functions as an androgen transport protein, but may also be involved in receptor mediated processes. Each dimer binds one molecule of steroid. Specific for 5-alpha-dihydrotestosterone, testosterone, and 17-beta-estradiol. Regulates the plasma metabolic clearance rate of steroid hormones by controlling their plasma concentration. The polypeptide is Sex hormone-binding globulin (SHBG) (Phodopus sungorus (Striped hairy-footed hamster)).